The primary structure comprises 150 residues: Small ribosomal subunit protein uS11 (150 aa).

Positions aspartate 130–leucine 150 are disordered. Residues arginine 141–leucine 150 show a composition bias toward basic residues.

The protein belongs to the universal ribosomal protein uS11 family.

This chain is Small ribosomal subunit protein uS11 (RPS14), found in Lupinus luteus (European yellow lupine).